We begin with the raw amino-acid sequence, 220 residues long: Thiamine-phosphate synthase (220 aa).

Residues 39-43 (QLRDK) and N80 each bind 4-amino-2-methyl-5-(diphosphooxymethyl)pyrimidine. Positions 81 and 100 each coordinate Mg(2+). S119 is a 4-amino-2-methyl-5-(diphosphooxymethyl)pyrimidine binding site. 145–147 (TPT) contacts 2-[(2R,5Z)-2-carboxy-4-methylthiazol-5(2H)-ylidene]ethyl phosphate. Position 148 (K148) interacts with 4-amino-2-methyl-5-(diphosphooxymethyl)pyrimidine. Position 176 (G176) interacts with 2-[(2R,5Z)-2-carboxy-4-methylthiazol-5(2H)-ylidene]ethyl phosphate.

The protein belongs to the thiamine-phosphate synthase family. The cofactor is Mg(2+).

It carries out the reaction 2-[(2R,5Z)-2-carboxy-4-methylthiazol-5(2H)-ylidene]ethyl phosphate + 4-amino-2-methyl-5-(diphosphooxymethyl)pyrimidine + 2 H(+) = thiamine phosphate + CO2 + diphosphate. The enzyme catalyses 2-(2-carboxy-4-methylthiazol-5-yl)ethyl phosphate + 4-amino-2-methyl-5-(diphosphooxymethyl)pyrimidine + 2 H(+) = thiamine phosphate + CO2 + diphosphate. The catalysed reaction is 4-methyl-5-(2-phosphooxyethyl)-thiazole + 4-amino-2-methyl-5-(diphosphooxymethyl)pyrimidine + H(+) = thiamine phosphate + diphosphate. It functions in the pathway cofactor biosynthesis; thiamine diphosphate biosynthesis; thiamine phosphate from 4-amino-2-methyl-5-diphosphomethylpyrimidine and 4-methyl-5-(2-phosphoethyl)-thiazole: step 1/1. Condenses 4-methyl-5-(beta-hydroxyethyl)thiazole monophosphate (THZ-P) and 2-methyl-4-amino-5-hydroxymethyl pyrimidine pyrophosphate (HMP-PP) to form thiamine monophosphate (TMP). This is Thiamine-phosphate synthase from Mycobacterium marinum (strain ATCC BAA-535 / M).